We begin with the raw amino-acid sequence, 839 residues long: Transient receptor potential cation channel subfamily V member 1 (839 aa).

The span at 1–13 (MKKRASVDSKESE) shows a compositional bias: basic and acidic residues. Disordered stretches follow at residues 1 to 59 (MKKR…LEES) and 82 to 107 (VVTSPRPADGPTSTRQLTQDSIPTSA). The Cytoplasmic portion of the chain corresponds to 1 to 433 (MKKRASVDSK…LQDKWDRFVK (433 aa)). The segment covering 92 to 105 (PTSTRQLTQDSIPT) has biased composition (polar residues). Residues 111 to 139 (LKLYDRRSIFDAVAQNNCQDLDSLLPFLQ) form an ANK 1 repeat. Arg-117 serves as a coordination point for ATP. The residue at position 118 (Ser-118) is a Phosphoserine; by PKA and PKD. Thr-146 carries the phosphothreonine; by PKA; in vitro modification. ANK repeat units follow at residues 154–187 (ETGKTCLLKAMLNLHNGQNDTISLLLDIARQTNS), 204–229 (QTALHIAIERRNMVLVTLLVENGADV), 250–277 (GELPLSLAACTNQLAIVKFLLQNSWQPA), 286–322 (GNTVLHALVEVADNTADNTKFVTSMYNEILILGAKLY), and 336–359 (FTPLALAASSGKIGVLAYILQREI). Residues Lys-157, Lys-162, Asn-166, 201 to 204 (YRGQ), and 212 to 213 (ER) each bind ATP. A Phosphothreonine; by PKA; in vitro modification is found at Thr-372. The stretch at 394–416 (KNSVLEVIAYSSSETPNRHDMLL) is one ANK 7 repeat. A helical transmembrane segment spans residues 434–455 (RIFYFNFFIYCLYMIIFTMAAY). Over 456 to 472 (YRPVDGLPPYKMKNTVG) the chain is Extracellular. Residues 473–497 (DYFRVTGEILSVIGGFHFFFRGIQY) traverse the membrane as a helical segment. Over 498–510 (FLQRRPSVKTLFV) the chain is Cytoplasmic. Ser-504 carries the phosphoserine; by PKC/PRKCE modification. The chain crosses the membrane as a helical span at residues 511-532 (DSYSEILFFVQSLFLLASVVLY). 513-514 (YS) provides a ligand contact to resiniferatoxin. The Extracellular segment spans residues 533 to 535 (FSH). Residues 536–556 (RKEYVACMVFSLALGWTNMLY) traverse the membrane as a helical segment. Resiniferatoxin is bound by residues Thr-552 and Arg-559. Over 557–559 (YTR) the chain is Cytoplasmic. A helical membrane pass occupies residues 560–598 (GFQQMGIYAVMIEKMILRDLCRFMFVYLVFLFGFSTAVV). Topologically, residues 599–630 (TLIEDGKNESLSAEPHRWRGPGCRSAKNSYNS) are extracellular. An N-linked (GlcNAc...) asparagine glycan is attached at Asn-606. The segment at residues 631 to 652 (LYSTCLELFKFTIGMGDLEFTE) is an intramembrane region (pore-forming). Gly-644 is a binding site for Na(+). The Selectivity filter signature appears at 644 to 647 (GMGD). Residue Asp-647 coordinates Ca(2+). At 653 to 656 (NYDF) the chain is on the extracellular side. The helical transmembrane segment at 657-683 (KAVFIILLLAYVILTYILLLNMLIALM) threads the bilayer. The Cytoplasmic segment spans residues 684–839 (GETVNKIAQE…FKDSAVPGEK (156 aa)). The interval 685 to 713 (ETVNKIAQESKNIWKLQRAITILDTEKSF) is AD. Thr-705 carries the post-translational modification Phosphothreonine. The tract at residues 768–802 (EGVKRTLSFSLRSGRVSGRNWKNFALVPLLRDAST) is interaction with calmodulin. A Phosphoserine modification is found at Ser-775. Residues 778–793 (LRSGRVSGRNWKNFAL) form a required for PIP2-mediated channel inhibition region. Residue Ser-801 is modified to Phosphoserine; by PKC/PRKCE and PKC/PRKCZ. At Ser-821 the chain carries Phosphoserine.

It belongs to the transient receptor (TC 1.A.4) family. TrpV subfamily. TRPV1 sub-subfamily. Homotetramer. Interacts with PIRT. May also form a heteromeric channel with TRPV3. Interacts with CALM, PRKCM and CSK. Interacts with PRKCG and NTRK1, probably by forming a trimeric complex. Interacts with the Scolopendra mutilans RhTx toxin. Interacts with TMEM100. Interacts with PACS2. Post-translationally, phosphorylation by PKA reverses capsaicin-induced dephosphorylation at multiple sites, probably including Ser-118 as a major phosphorylation site. Phosphorylation by CAMKII seems to regulate binding to vanilloids. Phosphorylated and modulated by PRKCE, PRKCM and probably PRKCZ. Dephosphorylation by calcineurin seems to lead to receptor desensitization and phosphorylation by CAMKII recovers activity.

Its subcellular location is the postsynaptic cell membrane. It is found in the cell projection. The protein localises to the dendritic spine membrane. The protein resides in the cell membrane. The enzyme catalyses Ca(2+)(in) = Ca(2+)(out). The catalysed reaction is Mg(2+)(in) = Mg(2+)(out). It carries out the reaction Na(+)(in) = Na(+)(out). It catalyses the reaction K(+)(in) = K(+)(out). With respect to regulation, channel activity is activated via the interaction with PIRT and phosphatidylinositol 4,5-bisphosphate (PIP2). Both PIRT and PIP2 are required to activate channel activity. The channel is sensitized by ATP binding. Repeated stimulation with capsaicin gives rise to progressively smaller responses, due to desensitization. This desensitization is triggered by the influx of calcium ions and is inhibited by elevated ATP levels. Ca(2+) and CALM displace ATP from its binding site and trigger a conformation change that leads to a closed, desensitized channel. Intracellular PIP2 inhibits desensitization. The double-knot toxin (DkTx) from the Chinese earth tiger tarantula activates the channel and traps it in an open conformation. The Scolopendra mutilans RhTx toxin potentiates the heat activation pathway mediated by this channel by binding to the charge-rich outer pore region (in an activated state). Non-selective calcium permeant cation channel involved in detection of noxious chemical and thermal stimuli. Seems to mediate proton influx and may be involved in intracellular acidosis in nociceptive neurons. Involved in mediation of inflammatory pain and hyperalgesia. Sensitized by a phosphatidylinositol second messenger system activated by receptor tyrosine kinases, which involves PKC isozymes and PCL. Activation by vanilloids, like capsaicin, and temperatures higher than 42 degrees Celsius. Upon activation, exhibits a time- and Ca(2+)-dependent outward rectification, followed by a long-lasting refractory state. Mild extracellular acidic pH (6.5) potentiates channel activation by noxious heat and vanilloids, whereas acidic conditions (pH &lt;6) directly activate the channel. Can be activated by endogenous compounds, including 12-hydroperoxytetraenoic acid and bradykinin. Acts as ionotropic endocannabinoid receptor with central neuromodulatory effects. Triggers a form of long-term depression (TRPV1-LTD) mediated by the endocannabinoid anandamine in the hippocampus and nucleus accumbens by affecting AMPA receptors endocytosis. The polypeptide is Transient receptor potential cation channel subfamily V member 1 (Trpv1) (Cavia porcellus (Guinea pig)).